The chain runs to 154 residues: AP-1 complex subunit sigma-2 (154 aa).

It belongs to the adaptor complexes small subunit family. Adaptor protein complex 1 (AP-1) is a heterotetramer composed of two large adaptins (gamma-type subunit and beta-type subunit), a medium adaptin (mu-type subunit) and a small adaptin (sigma-type subunit).

The protein localises to the golgi apparatus. The protein resides in the trans-Golgi network. It is found in the cytoplasmic vesicle. Its subcellular location is the clathrin-coated vesicle membrane. Its function is as follows. Subunit of clathrin-associated adaptor protein complex 1 that plays a role in protein sorting in the trans-Golgi network (TGN) and endosomes. The AP complexes mediate the recruitment of clathrin to membranes and the recognition of sorting signals within the cytosolic tails of transmembrane cargo molecules. Also involved in early steps of phagocytosis and macropinocytosis. This chain is AP-1 complex subunit sigma-2 (ap1s2), found in Dictyostelium discoideum (Social amoeba).